Consider the following 1402-residue polypeptide: Phospholipid-transporting ATPase dnf2 (1402 aa).

Helical transmembrane passes span 109 to 129, 135 to 155, 457 to 477, and 501 to 521; these read FQNV…ISIF, PGLA…KDAI, LNFI…GIAW, and VVTF…SLYI. Catalysis depends on Asp-569, which acts as the 4-aspartylphosphate intermediate. Asp-569, Lys-570, Thr-571, Glu-700, Phe-741, Ser-743, Lys-746, Lys-764, Arg-799, Thr-800, Thr-879, Gly-880, Asp-881, Arg-986, and Lys-992 together coordinate ATP. Residue Asp-569 participates in Mg(2+) binding. Thr-571 contributes to the Mg(2+) binding site. Mg(2+) is bound at residue Asp-1012. The ATP site is built by Asn-1015 and Asp-1016. Asp-1016 contributes to the Mg(2+) binding site. Transmembrane regions (helical) follow at residues 1066-1086, 1101-1121, 1151-1171, 1193-1213, 1218-1238, and 1260-1280; these read VAEM…TLFW, YTYV…VMGV, IFIG…FFSF, LGVY…ILNQ, VFSI…TGVY, and FWAV…LFMT. Lys-1275 lines the a 1,2-diacyl-sn-glycero-3-phospho-L-serine pocket.

Belongs to the cation transport ATPase (P-type) (TC 3.A.3) family. Type IV subfamily. It depends on Mg(2+) as a cofactor.

The protein resides in the cell membrane. The protein localises to the endoplasmic reticulum membrane. The catalysed reaction is ATP + H2O + phospholipidSide 1 = ADP + phosphate + phospholipidSide 2.. The enzyme catalyses a 1,2-diacyl-sn-glycero-3-phosphoethanolamine(out) + ATP + H2O = a 1,2-diacyl-sn-glycero-3-phosphoethanolamine(in) + ADP + phosphate + H(+). It catalyses the reaction a 1,2-diacyl-sn-glycero-3-phosphocholine(out) + ATP + H2O = a 1,2-diacyl-sn-glycero-3-phosphocholine(in) + ADP + phosphate + H(+). It carries out the reaction a beta-D-glucosyl-(1&lt;-&gt;1')-N-acylsphing-4-enine(out) + ATP + H2O = a beta-D-glucosyl-(1&lt;-&gt;1')-N-acylsphing-4-enine(in) + ADP + phosphate + H(+). The catalysed reaction is a 1,2-diacyl-sn-glycero-3-phospho-L-serine(out) + ATP + H2O = a 1,2-diacyl-sn-glycero-3-phospho-L-serine(in) + ADP + phosphate + H(+). Functionally, catalytic component of a P4-ATPase flippase complex which catalyzes the hydrolysis of ATP coupled to the transport of glucosylceramide, phosphatidylcholine, phosphatidylethanolamine, and small amounts of phosphatidylserine from the lumenal to the cytosolic leaflet of the cell membrane and ensures the maintenance of asymmetric distribution of phospholipids. This Schizosaccharomyces pombe (strain 972 / ATCC 24843) (Fission yeast) protein is Phospholipid-transporting ATPase dnf2.